The chain runs to 178 residues: CDP-diacylglycerol--glycerol-3-phosphate 3-phosphatidyltransferase (178 aa).

The next 4 helical transmembrane spans lie at 28-48 (LSSL…GFFA), 88-108 (LIFF…IFLI), 125-145 (LFVS…VNFL), and 147-167 (ILTN…WVDY).

Belongs to the CDP-alcohol phosphatidyltransferase class-I family.

It is found in the cell membrane. The catalysed reaction is a CDP-1,2-diacyl-sn-glycerol + sn-glycerol 3-phosphate = a 1,2-diacyl-sn-glycero-3-phospho-(1'-sn-glycero-3'-phosphate) + CMP + H(+). It participates in phospholipid metabolism; phosphatidylglycerol biosynthesis; phosphatidylglycerol from CDP-diacylglycerol: step 1/2. This protein catalyzes the committed step to the synthesis of the acidic phospholipids. This is CDP-diacylglycerol--glycerol-3-phosphate 3-phosphatidyltransferase (pgsA) from Aquifex aeolicus (strain VF5).